A 787-amino-acid chain; its full sequence is LPS-assembly protein LptD (787 aa).

A disordered region spans residues Met1 to Gly78. Residues Leu59–Gly78 show a composition bias toward low complexity.

The protein belongs to the LptD family. In terms of assembly, component of the lipopolysaccharide transport and assembly complex. Interacts with LptE and LptA.

Together with LptE, is involved in the assembly of lipopolysaccharide (LPS) at the surface of the outer membrane. This is LPS-assembly protein LptD from Aromatoleum aromaticum (strain DSM 19018 / LMG 30748 / EbN1) (Azoarcus sp. (strain EbN1)).